The chain runs to 731 residues: 1,4-alpha-glucan branching enzyme GlgB (731 aa).

The Nucleophile role is filled by Asp-412. Catalysis depends on Glu-465, which acts as the Proton donor.

The protein belongs to the glycosyl hydrolase 13 family. GlgB subfamily. Monomer.

It catalyses the reaction Transfers a segment of a (1-&gt;4)-alpha-D-glucan chain to a primary hydroxy group in a similar glucan chain.. It participates in glycan biosynthesis; glycogen biosynthesis. In terms of biological role, catalyzes the formation of the alpha-1,6-glucosidic linkages in glycogen by scission of a 1,4-alpha-linked oligosaccharide from growing alpha-1,4-glucan chains and the subsequent attachment of the oligosaccharide to the alpha-1,6 position. This Bordetella pertussis (strain Tohama I / ATCC BAA-589 / NCTC 13251) protein is 1,4-alpha-glucan branching enzyme GlgB.